The following is a 399-amino-acid chain: S-adenosylmethionine synthase (399 aa).

ATP is bound at residue His-17. Asp-19 is a Mg(2+) binding site. Glu-45 contributes to the K(+) binding site. L-methionine is bound by residues Glu-58 and Gln-101. The segment at 101-111 (QSADIAMGVDQ) is flexible loop. ATP-binding positions include 177-179 (DGK), 244-245 (RF), Asp-253, 259-260 (RK), Ala-276, and Lys-280. Position 253 (Asp-253) interacts with L-methionine. Lys-284 is an L-methionine binding site.

This sequence belongs to the AdoMet synthase family. Homotetramer; dimer of dimers. It depends on Mg(2+) as a cofactor. K(+) is required as a cofactor.

It is found in the cytoplasm. The catalysed reaction is L-methionine + ATP + H2O = S-adenosyl-L-methionine + phosphate + diphosphate. It participates in amino-acid biosynthesis; S-adenosyl-L-methionine biosynthesis; S-adenosyl-L-methionine from L-methionine: step 1/1. Its function is as follows. Catalyzes the formation of S-adenosylmethionine (AdoMet) from methionine and ATP. The overall synthetic reaction is composed of two sequential steps, AdoMet formation and the subsequent tripolyphosphate hydrolysis which occurs prior to release of AdoMet from the enzyme. This chain is S-adenosylmethionine synthase, found in Bacillus cereus (strain ATCC 10987 / NRS 248).